Here is a 744-residue protein sequence, read N- to C-terminus: Tripartite motif-containing protein 2 (744 aa).

At S10 the chain carries Phosphoserine. The RING-type zinc finger occupies 23–64; it reads CSICLERYKNPKVLPCLHTFCERCLQNYIPAHSLTLSCPVCR. The B box-type zinc finger occupies 113-154; the sequence is GKPLSCPNHDGNVMEFYCQSCETAMCRECTEGEHAEHPTVPL. Zn(2+)-binding residues include C118, H121, C141, and H146. One copy of the Filamin repeat lies at 320–421; the sequence is TTNAVASETV…IRGSPFKLKV (102 aa). T371 is modified (phosphothreonine). A phosphoserine mark is found at S375, S424, and S428. Residues 432–462 form a disordered region; the sequence is EGVKRRVKSPGSGHVKQKAVKRPASMYSTGK. NHL repeat units lie at residues 473 to 516, 520 to 563, 564 to 605, 609 to 652, 656 to 699, and 700 to 743; these read IFRV…FSND, KSRF…FSSD, GKFK…FQPN, VTRF…FNQE, MLKF…FDGS, and GSFL…YRYL.

Belongs to the TRIM/RBCC family. In terms of assembly, forms homooligomers. Interacts with TRIM3; this interaction reduces TRIM2 activity. Interacts with myosin V; myosin V may not be a substrate for ubiquitination. Interacts with NEFL. Interacts with phosphorylated BCL2L11. Interacts with SIRPA. In terms of processing, RING-type zinc finger-dependent and UBE2D1-dependent autoubiquitination.

It is found in the cytoplasm. The catalysed reaction is S-ubiquitinyl-[E2 ubiquitin-conjugating enzyme]-L-cysteine + [acceptor protein]-L-lysine = [E2 ubiquitin-conjugating enzyme]-L-cysteine + N(6)-ubiquitinyl-[acceptor protein]-L-lysine.. It functions in the pathway protein modification; protein ubiquitination. Its function is as follows. UBE2D1-dependent E3 ubiquitin-protein ligase that mediates the ubiquitination of NEFL and of phosphorylated BCL2L11. Plays a neuroprotective function. May play a role in neuronal rapid ischemic tolerance. Plays a role in antiviral immunity and limits New World arenavirus infection independently of its ubiquitin ligase activity. The chain is Tripartite motif-containing protein 2 (TRIM2) from Callithrix jacchus (White-tufted-ear marmoset).